The chain runs to 462 residues: Fumarate hydratase class II (462 aa).

Substrate is bound by residues 97–99, 127–130, 137–139, and threonine 185; these read SGT, HPND, and SSN. The Proton donor/acceptor role is filled by histidine 186. The active site involves serine 316. Substrate contacts are provided by residues serine 317 and 322 to 324; that span reads KVN.

This sequence belongs to the class-II fumarase/aspartase family. Fumarase subfamily. In terms of assembly, homotetramer.

It is found in the cytoplasm. The catalysed reaction is (S)-malate = fumarate + H2O. The protein operates within carbohydrate metabolism; tricarboxylic acid cycle; (S)-malate from fumarate: step 1/1. Involved in the TCA cycle. Catalyzes the stereospecific interconversion of fumarate to L-malate. In Bacillus cereus (strain ATCC 14579 / DSM 31 / CCUG 7414 / JCM 2152 / NBRC 15305 / NCIMB 9373 / NCTC 2599 / NRRL B-3711), this protein is Fumarate hydratase class II.